Consider the following 253-residue polypeptide: Indole-3-glycerol phosphate synthase (253 aa).

The protein belongs to the TrpC family.

The catalysed reaction is 1-(2-carboxyphenylamino)-1-deoxy-D-ribulose 5-phosphate + H(+) = (1S,2R)-1-C-(indol-3-yl)glycerol 3-phosphate + CO2 + H2O. Its pathway is amino-acid biosynthesis; L-tryptophan biosynthesis; L-tryptophan from chorismate: step 4/5. This Bacillus cereus (strain AH187) protein is Indole-3-glycerol phosphate synthase.